The primary structure comprises 201 residues: Holliday junction branch migration complex subunit RuvA (201 aa).

The domain I stretch occupies residues 1 to 65 (MIAYIEGRVA…EDALELYGFS (65 aa)). Residues 66-143 (GWDERQTFLV…KVESLPASAG (78 aa)) are domain II. Residues 143–147 (GLAAG) form a flexible linker region. The tract at residues 148 to 201 (VPGSVLRDAVQALGNLGYAEEEAAPVLKNILKQDPDLDVSEALRAALKALAKAR) is domain III.

It belongs to the RuvA family. Homotetramer. Forms an RuvA(8)-RuvB(12)-Holliday junction (HJ) complex. HJ DNA is sandwiched between 2 RuvA tetramers; dsDNA enters through RuvA and exits via RuvB. An RuvB hexamer assembles on each DNA strand where it exits the tetramer. Each RuvB hexamer is contacted by two RuvA subunits (via domain III) on 2 adjacent RuvB subunits; this complex drives branch migration. In the full resolvosome a probable DNA-RuvA(4)-RuvB(12)-RuvC(2) complex forms which resolves the HJ.

The protein resides in the cytoplasm. In terms of biological role, the RuvA-RuvB-RuvC complex processes Holliday junction (HJ) DNA during genetic recombination and DNA repair, while the RuvA-RuvB complex plays an important role in the rescue of blocked DNA replication forks via replication fork reversal (RFR). RuvA specifically binds to HJ cruciform DNA, conferring on it an open structure. The RuvB hexamer acts as an ATP-dependent pump, pulling dsDNA into and through the RuvAB complex. HJ branch migration allows RuvC to scan DNA until it finds its consensus sequence, where it cleaves and resolves the cruciform DNA. This chain is Holliday junction branch migration complex subunit RuvA, found in Oleidesulfovibrio alaskensis (strain ATCC BAA-1058 / DSM 17464 / G20) (Desulfovibrio alaskensis).